A 365-amino-acid polypeptide reads, in one-letter code: Pre-mRNA-splicing factor srp2 (365 aa).

2 RRM domains span residues 6–69 (LFVG…RIVV) and 100–166 (LIVE…AVTL). The tract at residues 166-365 (LREDPDAANE…SAEGQVAAEW (200 aa)) is disordered. Positions 184-194 (FRSRSPPARRR) are enriched in basic residues. Phosphoserine occurs at positions 186, 188, 276, 294, 296, 298, and 308. The span at 195–307 (YRDDYRRGGD…SPRRDREENR (113 aa)) shows a compositional bias: basic and acidic residues. The segment covering 316–332 (SYSAAPEASMESSAPTE) has biased composition (low complexity). A compositionally biased stretch (polar residues) spans 341–353 (EEQQPLQNHSDVG).

Belongs to the splicing factor SR family. In terms of processing, extensively phosphorylated on serine residues in the RS domain.

It is found in the nucleus. Functionally, has a role in pre-mRNA splicing where it is involved in spliceosome assembly. This is Pre-mRNA-splicing factor srp2 (srp2) from Schizosaccharomyces pombe (strain 972 / ATCC 24843) (Fission yeast).